Here is a 410-residue protein sequence, read N- to C-terminus: Extracellular serine proteinase (410 aa).

The first 19 residues, M1 to S19, serve as a signal peptide directing secretion. Residues S20–F132 constitute a propeptide that is removed on maturation. The Inhibitor I9 domain maps to Y45–R130. Positions T139–F410 constitute a Peptidase S8 domain. Residues D171, H204, and S356 each act as charge relay system in the active site.

It belongs to the peptidase S8 family. Post-translationally, contains 4 Cys residues that form two disulfide bonds. Glycosylated. This proteinase has a 0.7% carbohydrate content.

It is found in the secreted. In terms of biological role, serine proteinase with preferred activity for amino acids with aromatic side groups at the P1' side of the scissible bond. The sequence is that of Extracellular serine proteinase from Thermus sp. (strain Rt41A).